The following is a 434-amino-acid chain: UDP-N-acetylglucosamine 1-carboxyvinyltransferase (434 aa).

22 to 23 (KN) contributes to the phosphoenolpyruvate binding site. Arginine 97 contributes to the UDP-N-acetyl-alpha-D-glucosamine binding site. Aspartate 121 functions as the Proton donor in the catalytic mechanism. Positions 319 and 341 each coordinate UDP-N-acetyl-alpha-D-glucosamine.

It belongs to the EPSP synthase family. MurA subfamily.

Its subcellular location is the cytoplasm. The enzyme catalyses phosphoenolpyruvate + UDP-N-acetyl-alpha-D-glucosamine = UDP-N-acetyl-3-O-(1-carboxyvinyl)-alpha-D-glucosamine + phosphate. The protein operates within cell wall biogenesis; peptidoglycan biosynthesis. In terms of biological role, cell wall formation. Adds enolpyruvyl to UDP-N-acetylglucosamine. This is UDP-N-acetylglucosamine 1-carboxyvinyltransferase from Porphyromonas gingivalis (strain ATCC BAA-308 / W83).